A 1746-amino-acid polypeptide reads, in one-letter code: Non-reducing polyketide synthase ptaA (1746 aa).

Residues 4-227 are N-terminal acylcarrier protein transacylase domain (SAT); sequence NSGSGTSPWG…ALPVYGGLCH (224 aa). Positions 361 to 796 constitute a Ketosynthase family 3 (KS3) domain; that stretch reads QSKIAIVGMS…GGNTTIAIEE (436 aa). Residues C534, H670, and H714 each act as for beta-ketoacyl synthase activity in the active site. Residues 898 to 1218 form a malonyl-CoA:ACP transacylase (MAT) domain region; sequence FAFTGQGASY…LGALHLAGIP (321 aa). Residues 1286–1605 are product template (PT) domain; it reads TSTVHRVIGE…RLLLDRFFSA (320 aa). Positions 1290-1425 are N-terminal hotdog fold; it reads HRVIGETFDG…ATLFYGKAND (136 aa). The 311-residue stretch at 1290–1600 folds into the PKS/mFAS DH domain; the sequence is HRVIGETFDG…FRRYPRLLLD (311 aa). H1322 serves as the catalytic Proton acceptor; for dehydratase activity. The segment at 1452–1600 is C-terminal hotdog fold; sequence VANRFSRNMA…FRRYPRLLLD (149 aa). The active-site Proton donor; for dehydratase activity is D1511. Positions 1671-1745 constitute a Carrier domain; that stretch reads DSITVKAMAL…DLRAWLLEYY (75 aa). At S1705 the chain carries O-(pantetheine 4'-phosphoryl)serine.

It carries out the reaction holo-[ACP] + 8 malonyl-CoA + 8 H(+) = atrochrysone carboxyl-[ACP] + 8 CO2 + 8 CoA + 2 H2O. Its pathway is secondary metabolite biosynthesis. Functionally, non-reducing polyketide synthase; part of the gene cluster that mediates the biosynthesis of pestheic acid, a diphenyl ether which is a biosynthetic precursor of the unique chloropupukeananes. The biosynthesis initiates from condensation of acetate and malonate units catalyzed by the non-reducing PKS ptaA. As the ptaA protein is TE/CLC domain-deficient, hydrolysis and Claisen cyclization of the polyketide could be catalyzed by ptaB containing a beta-lactamase domain. The ptaB protein might hydrolyze the thioester bond between the ACP of ptaA and the intermediate to release atrochrysone carboxylic acid, which is spontaneously dehydrated to form endocrocin anthrone. Endocrocin anthrone is then converted to endocrocin, catalyzed by the anthrone oxygenase ptaC. Spontaneous decarboxylation of endocrocin occurs to generate emodin. An O-methyltransferase (ptaH or ptaI) could methylate emodin to form physcion. PtaJ could then catalyze the oxidative cleavage of physcion, and rotation of the intermediate could then afford desmethylisosulochrin. PtaF, a putative NADH-dependent oxidoreductase, might also participate in the oxidative cleavage step. Desmethylisosulochrin is then transformed by another O-methyltransferase (ptaH or ptaI) to form isosulochrin. Chlorination of isosulochrin by ptaM in the cyclohexadienone B ring then produces chloroisosulochrin. PtaE is responsible for the oxidative coupling reactions of both benzophenones isosulochrin and chloroisosulochrin to RES-1214-1 and pestheic acid respectively, regardless of chlorination. The protein is Non-reducing polyketide synthase ptaA of Pestalotiopsis fici (strain W106-1 / CGMCC3.15140).